The chain runs to 1306 residues: Clustered mitochondria protein homolog (1306 aa).

The span at 1 to 11 (MAVNNEVNNAA) shows a compositional bias: low complexity. The segment at 1–47 (MAVNNEVNNAASETPTDVSSSSQKLATEETALTNGADHEEEDGGEAG) is disordered. Positions 12 to 33 (SETPTDVSSSSQKLATEETALT) are enriched in polar residues. In terms of domain architecture, Clu spans 336–580 (DITRTQENYL…RVTPLDITWM (245 aa)). 2 disordered regions span residues 630-689 (ERKR…QERI) and 912-956 (KQSQ…SPAA). A compositionally biased stretch (basic and acidic residues) spans 656 to 689 (EPAKSEEPTENGELAKKSESDEAAEPSKPDQERI). TPR repeat units follow at residues 1032–1065 (ARVY…SERT), 1074–1107 (LLNY…WKVV), and 1116–1149 (ITTI…CEEV). The disordered stretch occupies residues 1275 to 1306 (FIEGSDQSNQNKKRPGRSNPKRRGGAAATAGK). The span at 1285 to 1298 (NKKRPGRSNPKRRG) shows a compositional bias: basic residues.

Belongs to the CLU family. May associate with the eukaryotic translation initiation factor 3 (eIF-3) complex.

The protein resides in the cytoplasm. MRNA-binding protein involved in proper cytoplasmic distribution of mitochondria. This Botryotinia fuckeliana (strain B05.10) (Noble rot fungus) protein is Clustered mitochondria protein homolog.